The primary structure comprises 542 residues: Probable cysteine proteinase 361L (542 aa).

Active-site residues include C172, H382, and N414. The chain crosses the membrane as a helical span at residues 520–540 (TNNWYIYALIIIFILIIFFVL).

The protein belongs to the peptidase C1 family.

The protein localises to the membrane. Its function is as follows. Probable cysteine protease. The sequence is that of Probable cysteine proteinase 361L from Acheta domesticus (House cricket).